Consider the following 172-residue polypeptide: Adenine phosphoribosyltransferase (172 aa).

It belongs to the purine/pyrimidine phosphoribosyltransferase family. In terms of assembly, homodimer.

It localises to the cytoplasm. It carries out the reaction AMP + diphosphate = 5-phospho-alpha-D-ribose 1-diphosphate + adenine. Its pathway is purine metabolism; AMP biosynthesis via salvage pathway; AMP from adenine: step 1/1. Functionally, catalyzes a salvage reaction resulting in the formation of AMP, that is energically less costly than de novo synthesis. This Clostridium novyi (strain NT) protein is Adenine phosphoribosyltransferase.